The primary structure comprises 517 residues: 3-hydroxyphenylacetate 6-hydroxylase (517 aa).

Cys449 contributes to the heme binding site.

Belongs to the cytochrome P450 family.

The catalysed reaction is 3-hydroxyphenylacetate + NADH + O2 + H(+) = homogentisate + NAD(+) + H2O. The enzyme catalyses 3-hydroxyphenylacetate + NADPH + O2 + H(+) = homogentisate + NADP(+) + H2O. It carries out the reaction 3,4-dihydroxyphenylacetate + NADH + O2 + H(+) = 2,4,5-trihydroxyphenylacetate + NAD(+) + H2O. It catalyses the reaction 3,4-dihydroxyphenylacetate + NADPH + O2 + H(+) = 2,4,5-trihydroxyphenylacetate + NADP(+) + H2O. The protein operates within aromatic compound metabolism; phenylacetate degradation. Functionally, catalyzes the hydroxylation of 3-hydroxyphenylacetate and 3,4-dihydroxyphenylacetate to 2,5-dihydroxyphenylacetate (homogentisate) and 2,4,5-trihydroxyphenylacetate, respectively. Both of these compounds are used as substrate by homogentisate dioxygenase in the homogentisate pathway. The homogentisate pathway is used to catabolize phenylacetate and use it as a carbon source. Can also catalyze the hydroxylation of phenylacetate to 2-hydroxyphenylacetate at low efficiency to compensate for loss of phacA. In Emericella nidulans (Aspergillus nidulans), this protein is 3-hydroxyphenylacetate 6-hydroxylase (phacB).